The sequence spans 180 residues: MANRLKEKYLNEVVPALTEQFNYSSVMAVPKVDKIVLNMGVGDAVSNAKNLEKAAQELALISGQKPLITKAKKSIAGFRLREGVAIGAKVTLRGERMYEFLDKLVTVSLPRVRDFHGVPTKSFDGRGNYTLGVKEQLIFPEINFDDVDKTRGMDIVIVTTANTDEESRALLTGLGMPFAK.

This sequence belongs to the universal ribosomal protein uL5 family. In terms of assembly, part of the 50S ribosomal subunit; part of the 5S rRNA/L5/L18/L25 subcomplex. Contacts the 5S rRNA and the P site tRNA. Forms a bridge to the 30S subunit in the 70S ribosome.

This is one of the proteins that bind and probably mediate the attachment of the 5S RNA into the large ribosomal subunit, where it forms part of the central protuberance. In the 70S ribosome it contacts protein S13 of the 30S subunit (bridge B1b), connecting the 2 subunits; this bridge is implicated in subunit movement. Contacts the P site tRNA; the 5S rRNA and some of its associated proteins might help stabilize positioning of ribosome-bound tRNAs. This is Large ribosomal subunit protein uL5 from Streptococcus suis (strain 05ZYH33).